A 348-amino-acid polypeptide reads, in one-letter code: Protein pelota homolog (348 aa).

The protein belongs to the eukaryotic release factor 1 family. Pelota subfamily. Monomer. A divalent metal cation is required as a cofactor.

Its subcellular location is the cytoplasm. May function in recognizing stalled ribosomes, interact with stem-loop structures in stalled mRNA molecules, and effect endonucleolytic cleavage of the mRNA. May play a role in the release non-functional ribosomes and degradation of damaged mRNAs. Has endoribonuclease activity. The polypeptide is Protein pelota homolog (Methanococcus aeolicus (strain ATCC BAA-1280 / DSM 17508 / OCM 812 / Nankai-3)).